Here is a 1119-residue protein sequence, read N- to C-terminus: DISARM protein DrmA (1119 aa).

The tract at residues 73–95 (PESGMEEDVEQQRNSELEQEAEE) is disordered. Residues 813 to 986 (ELSKYIDPYR…ATPYASRARD (174 aa)) form the Helicase C-terminal domain.

The protein belongs to the helicase family.

It is found in the cytoplasm. Component of antiviral defense system DISARM (defense island system associated with restriction-modification), composed of DrmE, DrmA, DrmB, DrmC and DrmMII. DISARM is probably a multi-gene restriction module, this subunit is probably a helicase. Expression of DISARM in B.subtilis (strain BEST7003) confers resistance to phages Nf, phi29, phi105, phi3T, SPO1, SPR and SPP1. Protection is over 10(7)-fold against phi3T, 10(4)-10(5)-fold against Nf, phi29, phi105 and SPR, 100-fold against SPO1 and 10-fold against SPP1. DISARM does not interfere with phage adsorption, but instead interferes with (phi3T) DNA replication early in its cycle, preventing replication, circularization and lysogeny and probably causes phage DNA degradation (DNA is degraded in SPP1-infected cells). The protein is DISARM protein DrmA of Bacillus paralicheniformis (strain ATCC 9945a / NCIMB 11709 / CD-2).